We begin with the raw amino-acid sequence, 506 residues long: Tyrosine-protein phosphatase non-receptor type substrate 1 (506 aa).

A signal peptide spans 1–29 (MEPARPAPGRLRPLLCLLLAASNAWTGTA). An Ig-like V-type domain is found at 30–145 (GDGELQVIQP…SGPGTHLTVS (116 aa)). Over 30-371 (GDGELQVIQP…PGPNDSNWTS (342 aa)) the chain is Extracellular. A disulfide bond links Cys-55 and Cys-121. An N-linked (GlcNAc...) asparagine glycan is attached at Asn-92. Residues 136–159 (SGPGTHLTVSAKPSPPVLSGPTVR) form a disordered region. Ig-like C1-type domains lie at 148–248 (PSPP…ANLS) and 255–348 (PTLE…HTLE). Residues Asn-167, Asn-179, Asn-204, Asn-210, Asn-246, Asn-270, Asn-292, Asn-311, Asn-319, Asn-344, Asn-365, and Asn-368 are each glycosylated (N-linked (GlcNAc...) asparagine). A disulfide bond links Cys-170 and Cys-228. The cysteines at positions 273 and 331 are disulfide-linked. The disordered stretch occupies residues 344 to 364 (NHTLEVSAPQKDQDTGQTPGP). The helical transmembrane segment at 372–392 (IFIVVGVVCALLVALLIAALY) threads the bilayer. Topologically, residues 393–506 (LLRIRQNKAK…EYASVQVQRK (114 aa)) are cytoplasmic. The interval 402–468 (KGSTSSTRLH…QARPPPVSED (67 aa)) is disordered. Over residues 409–418 (RLHEPEKNTR) the composition is skewed to basic and acidic residues. Residues 419 to 429 (ETTQIQDNNDI) are compositionally biased toward polar residues. Tyr-431 bears the Phosphotyrosine; by Tyr-kinases mark. Residues 432–435 (ADLN) carry the SH2-binding motif. Residues 441–446 (KSTPKA) carry the SH3-binding motif. Polar residues predominate over residues 444-456 (PKANEPNNHTEYA). Residues Tyr-455, Tyr-472, and Tyr-498 each carry the phosphotyrosine; by Tyr-kinases modification. 3 short sequence motifs (SH2-binding) span residues 455-458 (YASI), 472-475 (YADL), and 498-501 (YASV). Positions 480–506 (LNRTPKQPAPKPEPSYSEYASVQVQRK) are disordered. Polar residues predominate over residues 497 to 506 (EYASVQVQRK).

Binds PTPN11 when tyrosine-phosphorylated, except in macrophages, where it primarily binds PTPN6. Binds GRB2 in vitro. Binds JAK2 irrespective of its phosphorylation status and forms a stable complex. Binds SCAP1 and/or SCAP2. The resulting complex recruits FYB1. Binds FGR and PTK2B. Interacts with TRIM2. In terms of processing, phosphorylated on tyrosine residues. In terms of tissue distribution, highly expressed in spleen macrophages. Detected in skin dendritic cells.

It localises to the membrane. Its function is as follows. Immunoglobulin-like cell surface receptor for CD47. Acts as docking protein and induces translocation of PTPN6, PTPN11 and other binding partners from the cytosol to the plasma membrane. Supports adhesion of cerebellar neurons, neurite outgrowth and glial cell attachment. May play a key role in intracellular signaling during synaptogenesis and in synaptic function. Involved in the negative regulation of receptor tyrosine kinase-coupled cellular responses induced by cell adhesion, growth factors or insulin. Mediates negative regulation of phagocytosis, mast cell activation and dendritic cell activation. CD47 binding prevents maturation of immature dendritic cells and inhibits cytokine production by mature dendritic cells. Plays a role in antiviral immunity and limits new world arenavirus infection by decreasing virus internalization. Receptor for THBS1. Interaction with THBS1 stimulates phosphorylation of SIRPA. In response to THBS1, involved in ROS signaling in non-phagocytic cells, stimulating NADPH oxidase-derived ROS production. This chain is Tyrosine-protein phosphatase non-receptor type substrate 1 (SIRPA), found in Bos taurus (Bovine).